The sequence spans 213 residues: Putative 3-methyladenine DNA glycosylase (213 aa).

This sequence belongs to the DNA glycosylase MPG family.

This Corynebacterium jeikeium (strain K411) protein is Putative 3-methyladenine DNA glycosylase.